A 1404-amino-acid chain; its full sequence is MKSLLADLFKQTLPNEEEFDAITIGLASPDKIRSWSYGEVKKPETINYRTFKPERDGLFCAKIFGPVKDYECLCGKYKRLKHRGVICEKCGVEVTLSKVRRERMGHIELASPVAHIWFLKSLPSRLGMVLDMTLRDIERVLYFEAFVVVEPGMTPLNRAQLLTEDDYLAKVEEYGDDFDAVMGAEGIRELLRTLDVNQEIERLRSDLETTGSEAKIKKFSKRLKVLEAFQQSGIKPEWMILEVLPVLPPDLRPLVPLDGGRFATSDLNDLYRRVINRNNRLKRLLELKAPDIIVRNEKRMLQESVDSLLDNGRRGKAMTGANKRPLKSLADMIKGKGGRFRQNLLGKRVDYSGRSVITVGPQLKLHQCGLPKLMALELFKPFIFNKLELMGLATTIKQAKKMVESQEPVVWDILEDVIREHPVMLNRAPTLHRLGIQAFEPVLIEGKAIQLHPLVCVAFNADFDGDQMAVHVPLSLEAQMEARTLMLASNNVLSPANGDPIIVPSQDIVLGLYYATREGVNVPGEGMLFTDVGEVKRAYESGQISLHARVTVRLKEFDRGPEGERIERVVRHNTTAGRAILSEILPAGLPFSVIDKPLKKKEISKLINASFRRCGLRATVIFADQLMQYGYRLATRAGISIAVKDMLVPDLKEDLIRAAEAEVKEIAQQYTSGLVTDGERYNKVVDIWGRCGDQVAKAMMEQLGQEPVVDRNGNTVKQEAFNSIYMMADSGARGSAAQIRQLAGMRGLMAKPDGSIIETPITTNFREGLNVLQYFISTHGARKGLADTALKTANSGYLTRRLVDVTQDLVVIEDDCGTREGFNMKALIEGGEVVEPLRERILGRVCAEDVVNPDTQETAIEAGTLLDEDMVDLIESLGVDEVKVRTPLTCETRYGLCAKCYGRDLGRGAMVNAGEAVGVIAAQSIGEPGTQLTMRTFHVGGAASRAAAASGVEAKSSGTIRFAGNMRYVANAKGEKVVIARSAEVVVADDMGRERERHKLPYGAMLLVDDGAQVKAGAQLASWDPHTRPIVTEYSGTVKFENVEEGVTVAKQIDEVTGLSTLVVIDSKRRSSSGAAKGVRPQVKLLDENGEEVRIAGTDHAVAITFQVGSLITVKDGQQVSVGDILARIPQESAKTRDITGGLPRVAELFEARSPKDAGLLAEYTGTVSFGKDTKGKQRLVITEPDGTVHEFLIPKDKHLMVHDGQVVNKGELIVDGPADPHDILRLQGINELARYIIDEVQDVYRLQGVKINDKHIEVIVRQMLRRVVITDPGDTKFIREEQVERSEVLDENDRIEAEGKLPAQYENVLLGITKASLSTDSFISAASFQETTRVLTEAAIMGKRDELRGLKENVIVGRLIPAGTGLAYHRSRRSQSAGEDLGIEHAWAPIETPAEEQHDISAS.

Residues Cys72, Cys74, Cys87, and Cys90 each contribute to the Zn(2+) site. Mg(2+)-binding residues include Asp462, Asp464, and Asp466. The Zn(2+) site is built by Cys816, Cys890, Cys897, and Cys900.

It belongs to the RNA polymerase beta' chain family. The RNAP catalytic core consists of 2 alpha, 1 beta, 1 beta' and 1 omega subunit. When a sigma factor is associated with the core the holoenzyme is formed, which can initiate transcription. Mg(2+) serves as cofactor. Zn(2+) is required as a cofactor.

It carries out the reaction RNA(n) + a ribonucleoside 5'-triphosphate = RNA(n+1) + diphosphate. Its function is as follows. DNA-dependent RNA polymerase catalyzes the transcription of DNA into RNA using the four ribonucleoside triphosphates as substrates. The sequence is that of DNA-directed RNA polymerase subunit beta' from Azoarcus sp. (strain BH72).